A 226-amino-acid chain; its full sequence is Ribonuclease 3 (226 aa).

One can recognise an RNase III domain in the interval 6 to 128 (INRLQRKLGY…LIGGVFLDSD (123 aa)). Mg(2+) is bound at residue Glu41. Asp45 is an active-site residue. Asp114 and Glu117 together coordinate Mg(2+). Residue Glu117 is part of the active site. In terms of domain architecture, DRBM spans 155–225 (DPKTRLQEYL…AEQALKMLEL (71 aa)).

This sequence belongs to the ribonuclease III family. In terms of assembly, homodimer. Mg(2+) serves as cofactor.

It localises to the cytoplasm. It catalyses the reaction Endonucleolytic cleavage to 5'-phosphomonoester.. In terms of biological role, digests double-stranded RNA. Involved in the processing of primary rRNA transcript to yield the immediate precursors to the large and small rRNAs (23S and 16S). Processes some mRNAs, and tRNAs when they are encoded in the rRNA operon. Processes pre-crRNA and tracrRNA of type II CRISPR loci if present in the organism. The protein is Ribonuclease 3 of Enterobacter sp. (strain 638).